The chain runs to 392 residues: Small ribosomal subunit protein bS1 (392 aa).

4 S1 motif domains span residues 16–90 (GDKV…LSKR), 108–173 (DEVI…LSRK), 194–262 (GDVI…LSIK), and 279–348 (DDVI…LSIK). Residues 361 to 380 (ASTTQSYLEDDNDEDKPTLG) are disordered.

It belongs to the bacterial ribosomal protein bS1 family.

Its function is as follows. Binds mRNA; thus facilitating recognition of the initiation point. It is needed to translate mRNA with a short Shine-Dalgarno (SD) purine-rich sequence. The chain is Small ribosomal subunit protein bS1 (rpsA) from Staphylococcus epidermidis (strain ATCC 35984 / DSM 28319 / BCRC 17069 / CCUG 31568 / BM 3577 / RP62A).